The chain runs to 145 residues: D-aminoacyl-tRNA deacylase (145 aa).

Positions 137–138 match the Gly-cisPro motif, important for rejection of L-amino acids motif; that stretch reads GP.

Belongs to the DTD family. Homodimer.

It localises to the cytoplasm. The enzyme catalyses glycyl-tRNA(Ala) + H2O = tRNA(Ala) + glycine + H(+). It carries out the reaction a D-aminoacyl-tRNA + H2O = a tRNA + a D-alpha-amino acid + H(+). Its function is as follows. An aminoacyl-tRNA editing enzyme that deacylates mischarged D-aminoacyl-tRNAs. Also deacylates mischarged glycyl-tRNA(Ala), protecting cells against glycine mischarging by AlaRS. Acts via tRNA-based rather than protein-based catalysis; rejects L-amino acids rather than detecting D-amino acids in the active site. By recycling D-aminoacyl-tRNA to D-amino acids and free tRNA molecules, this enzyme counteracts the toxicity associated with the formation of D-aminoacyl-tRNA entities in vivo and helps enforce protein L-homochirality. The polypeptide is D-aminoacyl-tRNA deacylase (Francisella tularensis subsp. holarctica (strain LVS)).